A 425-amino-acid polypeptide reads, in one-letter code: Adenylosuccinate synthetase (425 aa).

GTP-binding positions include 12 to 18 (GDEGKGK) and 40 to 42 (GHT). Aspartate 13 serves as the catalytic Proton acceptor. 2 residues coordinate Mg(2+): aspartate 13 and glycine 40. IMP-binding positions include 13-16 (DEGK), 38-41 (NAGH), threonine 130, arginine 144, glutamine 225, threonine 240, and arginine 304. Residue histidine 41 is the Proton donor of the active site. 300 to 306 (ATTGRPR) lines the substrate pocket. GTP-binding positions include arginine 306, 332-334 (KLD), and 414-416 (SVG).

Belongs to the adenylosuccinate synthetase family. In terms of assembly, homodimer. It depends on Mg(2+) as a cofactor.

It is found in the cytoplasm. The catalysed reaction is IMP + L-aspartate + GTP = N(6)-(1,2-dicarboxyethyl)-AMP + GDP + phosphate + 2 H(+). It functions in the pathway purine metabolism; AMP biosynthesis via de novo pathway; AMP from IMP: step 1/2. In terms of biological role, plays an important role in the de novo pathway of purine nucleotide biosynthesis. Catalyzes the first committed step in the biosynthesis of AMP from IMP. In Desulfovibrio desulfuricans (strain ATCC 27774 / DSM 6949 / MB), this protein is Adenylosuccinate synthetase.